The sequence spans 542 residues: Phosphoacetylglucosamine mutase (542 aa).

Residue methionine 1 is modified to N-acetylmethionine. Threonine 62 is subject to Phosphothreonine. Serine 64 functions as the Phosphoserine intermediate in the catalytic mechanism. Mg(2+)-binding residues include serine 64, aspartate 276, aspartate 278, and aspartate 280. Position 64 is a phosphoserine (serine 64). Substrate contacts are provided by residues 370 to 372 (EAN), 496 to 500 (RPSGT), and arginine 505.

This sequence belongs to the phosphohexose mutase family. Mg(2+) serves as cofactor.

It carries out the reaction N-acetyl-alpha-D-glucosamine 1-phosphate = N-acetyl-D-glucosamine 6-phosphate. It participates in nucleotide-sugar biosynthesis; UDP-N-acetyl-alpha-D-glucosamine biosynthesis; N-acetyl-alpha-D-glucosamine 1-phosphate from alpha-D-glucosamine 6-phosphate (route I): step 2/2. Inhibited by Mn(2+), Cd(2+), Zn(2+), Cu(2+) and Be(2+). In terms of biological role, catalyzes the conversion of GlcNAc-6-P into GlcNAc-1-P during the synthesis of uridine diphosphate/UDP-GlcNAc, a sugar nucleotide critical to multiple glycosylation pathways including protein N- and O-glycosylation. In Sus scrofa (Pig), this protein is Phosphoacetylglucosamine mutase.